A 191-amino-acid polypeptide reads, in one-letter code: Large ribosomal subunit protein uL3 (191 aa).

The segment at 119–138 (AAHGSRFHRRPGSIGNREWP) is disordered.

Belongs to the universal ribosomal protein uL3 family. In terms of assembly, part of the 50S ribosomal subunit. Forms a cluster with proteins L14 and L19.

In terms of biological role, one of the primary rRNA binding proteins, it binds directly near the 3'-end of the 23S rRNA, where it nucleates assembly of the 50S subunit. The sequence is that of Large ribosomal subunit protein uL3 (rplC) from Helicobacter pylori (strain ATCC 700392 / 26695) (Campylobacter pylori).